Consider the following 546-residue polypeptide: Chaperonin GroEL (546 aa).

ATP is bound by residues 30–33, lysine 51, 87–91, glycine 415, 479–481, and aspartate 495; these read TLGP, DGTTT, and NAA. The disordered stretch occupies residues 527–546; that stretch reads EEKPDVSASSGGMGGMGGMM. Gly residues predominate over residues 537 to 546; that stretch reads GGMGGMGGMM.

It belongs to the chaperonin (HSP60) family. In terms of assembly, forms a cylinder of 14 subunits composed of two heptameric rings stacked back-to-back. Interacts with the co-chaperonin GroES.

It localises to the cytoplasm. The catalysed reaction is ATP + H2O + a folded polypeptide = ADP + phosphate + an unfolded polypeptide.. Functionally, together with its co-chaperonin GroES, plays an essential role in assisting protein folding. The GroEL-GroES system forms a nano-cage that allows encapsulation of the non-native substrate proteins and provides a physical environment optimized to promote and accelerate protein folding. This is Chaperonin GroEL from Baumannia cicadellinicola subsp. Homalodisca coagulata.